A 388-amino-acid polypeptide reads, in one-letter code: DNA ADP-ribosyl transferase-DNA ADP-ribosyl glycohydrolase fusion protein (388 aa).

In terms of domain architecture, DarT spans 6–197 (RELYYITHID…PVIPDPTFFF (192 aa)). NAD(+)-binding positions include 10–12 (YIT) and Arg50. Positions 34 to 52 (QSINCKKVYDNSIVLKRKS) are NAD(+)-binding element. Arg50 acts as the Proton acceptor in catalysis. Positions 107–152 (TDGNAASSETQIYRKSEIKNIKNIISVKDMEYWREEDGSKRKIMAE) are ADP-ribosylating turn-turn loop. The active site involves Glu152. Residues 196–376 (FFLPNREIKL…IYLPLEKRIP (181 aa)) form the Macro domain. Residues 215-216 (DM), 227-229 (SVN), Thr301, 339-343 (GCGLG), and 371-372 (LE) each bind ADP-D-ribose.

The protein in the N-terminal section; belongs to the DarT ADP-ribosyltransferase family. It in the C-terminal section; belongs to the DarG ADP-ribosyl glycohydrolase family.

The enzyme catalyses an N-(ADP-alpha-D-ribosyl)-thymidine in DNA + H2O = a thymidine in DNA + ADP-D-ribose. It carries out the reaction a thymidine in DNA + NAD(+) = an N-(ADP-alpha-D-ribosyl)-thymidine in DNA + nicotinamide + H(+). Functionally, a fusion protein of the toxic and antitoxin components of a hybrid type II/IV toxin-antitoxin (TA) system. The N-terminal domain ADP-ribosylates ssDNA on a thymidine residue, while the C-terminal domain removes the modification, neutralizing the toxic effect. The chain is DNA ADP-ribosyl transferase-DNA ADP-ribosyl glycohydrolase fusion protein from Thermosipho africanus (strain H17ap60334).